The chain runs to 460 residues: Putative 2,3-dihydroxypropane-1-sulfonate exporter (460 aa).

Residues 1-18 (MSQTSSNPATLRLPFKEK) are Cytoplasmic-facing. A helical transmembrane segment spans residues 19–39 (LAYGLGDLGSNILLDIGTLYL). Residues 40-46 (LKFYTDV) lie on the Periplasmic side of the membrane. The helical transmembrane segment at 47-67 (LGLPGTYGGIIFLIAKFFTAF) threads the bilayer. The Cytoplasmic segment spans residues 68–91 (TDMGTGIMLDSRRKIGPKGKFRPF). A helical transmembrane segment spans residues 92–112 (VLYAAFPVTLLAIANFVGTPF). The Periplasmic portion of the chain corresponds to 113 to 122 (EVTGKTVVAT). Residues 123–143 (MLFMLYGLVFSMMNCSYGAMV) traverse the membrane as a helical segment. Over 144 to 161 (PAITKNPDERASLAAWRQ) the chain is Cytoplasmic. Residues 162–182 (GGATLGLLLCTVGFVPVMNLI) form a helical membrane-spanning segment. Topologically, residues 183–190 (EGNAQLSY) are periplasmic. Residues 191 to 211 (IFAATLFSLFGLLFMWLCYAG) form a helical membrane-spanning segment. Residues 212–242 (VKERYVEVKPVDSAQKPGLLQSFRAIAGNRP) are Cytoplasmic-facing. A helical membrane pass occupies residues 243 to 263 (LFILCIANLCTLGAFNVKLAI). Topologically, residues 264-275 (QVYYTQYVLNDP) are periplasmic. Residues 276–296 (ILLSWMGFFSMGCIFIGVFLM) traverse the membrane as a helical segment. Residues 297 to 307 (PGAVRRFGKKK) are Cytoplasmic-facing. A helical membrane pass occupies residues 308–328 (VYIGGLLIWVAGDLLNYFFGG). Glycine 329 is a topological domain (periplasmic). The chain crosses the membrane as a helical span at residues 330–350 (SVSFVAFSCLAFFGSAFVNSL). Residues 351 to 386 (NWALVSDTVEYGEWRTGVRSEGTVYTGFTFFRKVSQ) are Cytoplasmic-facing. A helical transmembrane segment spans residues 387–407 (ALAGFFPGWMLTQIGYIPNVV). Topologically, residues 408–418 (QSAGTVEGLRQ) are periplasmic. A helical membrane pass occupies residues 419–439 (LIFIYPCVLAVITIIAMGCFY). Residues 440-460 (NLNEKMYVRIVEEIEARKHTV) lie on the Cytoplasmic side of the membrane.

Belongs to the sodium:galactoside symporter (TC 2.A.2) family.

The protein resides in the cell inner membrane. Functionally, could be involved in the export of 2,3-dihydroxypropane-1-sulfonate (DHPS). This chain is Putative 2,3-dihydroxypropane-1-sulfonate exporter (yihP), found in Salmonella typhimurium (strain LT2 / SGSC1412 / ATCC 700720).